A 434-amino-acid chain; its full sequence is Glutamyl-tRNA reductase (434 aa).

Substrate contacts are provided by residues 49–52 (TCNR), serine 109, 114–116 (EPQ), and glutamine 120. Cysteine 50 serves as the catalytic Nucleophile. 189-194 (GAGEMA) contacts NADP(+).

The protein belongs to the glutamyl-tRNA reductase family. As to quaternary structure, homodimer.

It catalyses the reaction (S)-4-amino-5-oxopentanoate + tRNA(Glu) + NADP(+) = L-glutamyl-tRNA(Glu) + NADPH + H(+). It participates in porphyrin-containing compound metabolism; protoporphyrin-IX biosynthesis; 5-aminolevulinate from L-glutamyl-tRNA(Glu): step 1/2. Functionally, catalyzes the NADPH-dependent reduction of glutamyl-tRNA(Glu) to glutamate 1-semialdehyde (GSA). This chain is Glutamyl-tRNA reductase, found in Desulfatibacillum aliphaticivorans.